A 152-amino-acid polypeptide reads, in one-letter code: Transcriptional regulator MraZ (152 aa).

SpoVT-AbrB domains follow at residues 5–52 and 81–124; these read ATLV…PLPE and ASEC…DEQT.

The protein belongs to the MraZ family. In terms of assembly, forms oligomers.

It is found in the cytoplasm. The protein resides in the nucleoid. Negatively regulates its own expression and that of the subsequent genes in the proximal part of the division and cell wall (dcw) gene cluster. Acts by binding directly to DNA. May also regulate the expression of genes outside the dcw cluster. This chain is Transcriptional regulator MraZ, found in Pectobacterium carotovorum subsp. carotovorum (strain PC1).